The chain runs to 139 residues: D-ribose pyranase (139 aa).

His-20 acts as the Proton donor in catalysis. Residues Asp-28, His-106, and 128-130 (YAN) contribute to the substrate site.

It belongs to the RbsD / FucU family. RbsD subfamily. In terms of assembly, homodecamer.

Its subcellular location is the cytoplasm. It carries out the reaction beta-D-ribopyranose = beta-D-ribofuranose. It participates in carbohydrate metabolism; D-ribose degradation; D-ribose 5-phosphate from beta-D-ribopyranose: step 1/2. Its function is as follows. Catalyzes the interconversion of beta-pyran and beta-furan forms of D-ribose. In Shewanella pealeana (strain ATCC 700345 / ANG-SQ1), this protein is D-ribose pyranase.